Reading from the N-terminus, the 1001-residue chain is MDPFVGWFQKEQEGPSLCTWLKIWETNAQEMGALLNQQLQQATTINGSTSSSSSSSNSGNNNNNNNNNIINNTITNTTNNTGNNSSAKPYLSRPYSSLNRVLNFRADSLEILQQQQQQQQLNGTTQRNSTNINTTSGGSTSSSADSTTNRDNNSPANSSSTNGPGAGTGTSTGAGGTGTNSPATTASSTAATTTGPATSMSDTSNNPPQSTTTPASRTNSIYYNPSRKKRPENKAGGAHYYMNNHMEMIAKYKGEPWRKPDYPYGEGVIGLHEEIEHFYQYVLPTPCEHAIRNEVVKRIEAVVHSIWPQAVVEIFGSFRTGLFLPTSDIDLVVLGLWEKLPLRTLEFELVSRGIAEACTVRVLDKASVPIIKLTDRETQVKVDISFNMQSGVQSAELIKKFKRDYPVLEKLVLVLKQFLLLRDLNEVFTGGISSYSLILMCISFLQMHPRGIYHDTANLGVLLLEFFELYGRRFNYMKIGISIKNGGRYMPKDELQRDMVDGHRPSLLCIEDPLTPGNDIGRSSYGVFQVQQAFKCAYRVLALAVSPLNLLGIDPRVNSILGRIIHITDDVIDYREWIRENFEHLVVVDRISPLPTAAPTAYATANGAPKYVIMPSGAVVQQLYHHPVQVPTAHGHSHAHSHSHGHAHPGAHLCQPYVTGTTVSAVTTTTTMAVVTVGVSAGGVQQQQQQQNATAHTHSQQQTQNQSQSRHRRGSTSSGDDSEDSKDGDVVETTSSAQEVVDIALSTPNGLANMSMPMPVHAVGMPASNSWSGNGNGNGNSSSSTGSSPEIAHIAAQEMDPELEDQQQQQQHQETSGGNGFIRPGDVGTGSNRGGGDGSGGRNYNQRNNHNSSGYYHQQYYVPPPMQQQLSKSNSSSNYHQQHHHSHSHGNHSHRQQHHHQQQHHHQQRPQHLRVGGGNRYQKSLGGSPIISAGNASNSSSNCSNSSSSSGSNNSRLPPLRGTLVNSSSAISIISISSESSIASSSSSSSRSGQDQQRDER.

Low complexity-rich tracts occupy residues 44-86 and 127-163; these read TING…NNSS and RNST…STNG. 2 disordered regions span residues 44–92 and 115–238; these read TING…PYLS and QQQQ…AGGA. Residues 164-178 are compositionally biased toward gly residues; that stretch reads PGAGTGTSTGAGGTG. Residues 179-216 show a composition bias toward low complexity; sequence TNSPATTASSTAATTTGPATSMSDTSNNPPQSTTTPAS. 2 residues coordinate Mn(2+): Asp-328 and Asp-330. The region spanning 458 to 517 is the PAP-associated domain; it reads NLGVLLLEFFELYGRRFNYMKIGISIKNGGRYMPKDELQRDMVDGHRPSLLCIEDPLTPG. Disordered stretches follow at residues 631–652, 687–740, 767–963, and 977–1001; these read PTAH…PGAH, QQQQ…AQEV, ASNS…LRGT, and SSES…RDER. Residues 635–649 show a composition bias toward basic residues; sequence GHSHAHSHSHGHAHP. 2 stretches are compositionally biased toward low complexity: residues 687-708 and 768-788; these read QQQQ…NQSQ and SNSW…TGSS. The segment covering 827-841 has biased composition (gly residues); sequence VGTGSNRGGGDGSGG. The span at 844-854 shows a compositional bias: polar residues; sequence YNQRNNHNSSG. Residues 855–880 show a composition bias toward low complexity; the sequence is YYHQQYYVPPPMQQQLSKSNSSSNYH. Residues 881–912 are compositionally biased toward basic residues; that stretch reads QQHHHSHSHGNHSHRQQHHHQQQHHHQQRPQH. 2 stretches are compositionally biased toward low complexity: residues 932-955 and 977-992; these read SAGN…SNNS and SSES…SSRS.

This sequence belongs to the DNA polymerase type-B-like family. Mn(2+) serves as cofactor.

Its subcellular location is the cytoplasm. It carries out the reaction RNA(n) + ATP = RNA(n)-3'-adenine ribonucleotide + diphosphate. In terms of biological role, involved in a post-transcriptional quality control mechanism limiting inappropriate expression of genetic information. Polyadenylation is required for the degradative activity of the exosome on several of its nuclear RNA substrates. Polyadenylates RNA processing and degradation intermediates of snRNAs and mRNAs. The sequence is that of Non-canonical poly(A) RNA polymerase protein Trf4-1 from Drosophila melanogaster (Fruit fly).